Reading from the N-terminus, the 29-residue chain is Glucagon (29 aa).

Phosphoserine is present on Ser-2.

Belongs to the glucagon family.

It localises to the secreted. In terms of biological role, glucagon plays a key role in glucose metabolism and homeostasis. Regulates blood glucose by increasing gluconeogenesis and decreasing glycolysis. The polypeptide is Glucagon (GCG) (Oryctolagus cuniculus (Rabbit)).